We begin with the raw amino-acid sequence, 439 residues long: Phosphomethylpyrimidine synthase (439 aa).

Substrate contacts are provided by residues asparagine 67, methionine 96, tyrosine 126, histidine 165, 187 to 189, 228 to 231, and glutamate 267; these read SRG and DSLR. Histidine 271 lines the Zn(2+) pocket. Residue tyrosine 294 participates in substrate binding. Histidine 335 serves as a coordination point for Zn(2+). Cysteine 411, cysteine 414, and cysteine 418 together coordinate [4Fe-4S] cluster.

It belongs to the ThiC family. The cofactor is [4Fe-4S] cluster.

The enzyme catalyses 5-amino-1-(5-phospho-beta-D-ribosyl)imidazole + S-adenosyl-L-methionine = 4-amino-2-methyl-5-(phosphooxymethyl)pyrimidine + CO + 5'-deoxyadenosine + formate + L-methionine + 3 H(+). Its pathway is cofactor biosynthesis; thiamine diphosphate biosynthesis. Its function is as follows. Catalyzes the synthesis of the hydroxymethylpyrimidine phosphate (HMP-P) moiety of thiamine from aminoimidazole ribotide (AIR) in a radical S-adenosyl-L-methionine (SAM)-dependent reaction. The sequence is that of Phosphomethylpyrimidine synthase from Ignicoccus hospitalis (strain KIN4/I / DSM 18386 / JCM 14125).